A 287-amino-acid chain; its full sequence is Cbb3-type cytochrome c oxidase subunit FixP (287 aa).

At 1 to 33 (MSQKHIDELSGVETTGHEWDGIQELNNPMPRWW) the chain is on the cytoplasmic side. A helical transmembrane segment spans residues 34–54 (IWTFYVTILWAIGYAIAYPAI). The Periplasmic portion of the chain corresponds to 55 to 287 (PMITSATNGY…IFVHALGGGT (233 aa)). Cytochrome c domains are found at residues 108-196 (FAIA…WGLT) and 203-284 (GLAA…HALG). Residues C121, C124, H125, M173, C216, C219, H220, and M261 each coordinate heme c.

The protein belongs to the CcoP / FixP family. In terms of assembly, component of the cbb3-type cytochrome c oxidase at least composed of FixN, FixO, FixQ and FixP. It depends on heme c as a cofactor.

The protein resides in the cell inner membrane. It participates in energy metabolism; oxidative phosphorylation. In terms of biological role, C-type cytochrome. Part of the cbb3-type cytochrome c oxidase complex. FixP subunit is required for transferring electrons from donor cytochrome c via its heme groups to FixO subunit. From there, electrons are shuttled to the catalytic binuclear center of FixN subunit where oxygen reduction takes place. The complex also functions as a proton pump. The sequence is that of Cbb3-type cytochrome c oxidase subunit FixP from Rhizobium etli (strain ATCC 51251 / DSM 11541 / JCM 21823 / NBRC 15573 / CFN 42).